Consider the following 1375-residue polypeptide: DNA-directed RNA polymerase subunit beta (1375 aa).

The protein belongs to the RNA polymerase beta chain family. As to quaternary structure, the RNAP catalytic core consists of 2 alpha, 1 beta, 1 beta' and 1 omega subunit. When a sigma factor is associated with the core the holoenzyme is formed, which can initiate transcription.

The catalysed reaction is RNA(n) + a ribonucleoside 5'-triphosphate = RNA(n+1) + diphosphate. Functionally, DNA-dependent RNA polymerase catalyzes the transcription of DNA into RNA using the four ribonucleoside triphosphates as substrates. The protein is DNA-directed RNA polymerase subunit beta of Malacoplasma penetrans (strain HF-2) (Mycoplasma penetrans).